The primary structure comprises 260 residues: Hydroxyethylthiazole kinase 1 (260 aa).

A substrate-binding site is contributed by Met39. Residues Arg115 and Thr160 each coordinate ATP. Gly187 serves as a coordination point for substrate.

It belongs to the Thz kinase family. The cofactor is Mg(2+).

The catalysed reaction is 5-(2-hydroxyethyl)-4-methylthiazole + ATP = 4-methyl-5-(2-phosphooxyethyl)-thiazole + ADP + H(+). The protein operates within cofactor biosynthesis; thiamine diphosphate biosynthesis; 4-methyl-5-(2-phosphoethyl)-thiazole from 5-(2-hydroxyethyl)-4-methylthiazole: step 1/1. Catalyzes the phosphorylation of the hydroxyl group of 4-methyl-5-beta-hydroxyethylthiazole (THZ). The sequence is that of Hydroxyethylthiazole kinase 1 from Streptococcus pneumoniae (strain JJA).